A 57-amino-acid polypeptide reads, in one-letter code: Large ribosomal subunit protein bL33 (57 aa).

This sequence belongs to the bacterial ribosomal protein bL33 family.

This Shewanella pealeana (strain ATCC 700345 / ANG-SQ1) protein is Large ribosomal subunit protein bL33.